We begin with the raw amino-acid sequence, 832 residues long: Ventricular zone-expressed PH domain-containing protein homolog 1 (832 aa).

The tract at residues 201–319 (AELLALMSQL…RYLVSQLANM (119 aa)) is interaction with TGFBR1. Residues 497–519 (DTHGSQLRNSSASHPSIIHSEPE) are disordered. Positions 499 to 510 (HGSQLRNSSASH) are enriched in polar residues. The interval 663-832 (ESTFPQQKDL…RESREVTTYL (170 aa)) is interaction with TGFBR1. One can recognise a PH domain in the interval 716-818 (QPLIEGKLKE…WLQCINVALA (103 aa)).

This sequence belongs to the MELT/VEPH family. As to quaternary structure, interacts with TGFBR1.

Its subcellular location is the cell membrane. Interacts with TGF-beta receptor type-1 (TGFBR1) and inhibits dissociation of activated SMAD2 from TGFBR1, impeding its nuclear accumulation and resulting in impaired TGF-beta signaling. May also affect FOXO, Hippo and Wnt signaling. The sequence is that of Ventricular zone-expressed PH domain-containing protein homolog 1 (Veph1) from Rattus norvegicus (Rat).